The chain runs to 333 residues: tRNA U34 carboxymethyltransferase (333 aa).

Residues lysine 97, tryptophan 111, lysine 116, glycine 136, 158–160 (DPS), 189–190 (IE), methionine 205, tyrosine 209, and arginine 324 contribute to the carboxy-S-adenosyl-L-methionine site.

Belongs to the class I-like SAM-binding methyltransferase superfamily. CmoB family. As to quaternary structure, homotetramer.

It catalyses the reaction carboxy-S-adenosyl-L-methionine + 5-hydroxyuridine(34) in tRNA = 5-carboxymethoxyuridine(34) in tRNA + S-adenosyl-L-homocysteine + H(+). In terms of biological role, catalyzes carboxymethyl transfer from carboxy-S-adenosyl-L-methionine (Cx-SAM) to 5-hydroxyuridine (ho5U) to form 5-carboxymethoxyuridine (cmo5U) at position 34 in tRNAs. In Chromohalobacter salexigens (strain ATCC BAA-138 / DSM 3043 / CIP 106854 / NCIMB 13768 / 1H11), this protein is tRNA U34 carboxymethyltransferase.